Reading from the N-terminus, the 181-residue chain is ATP synthase subunit b 2 (181 aa).

Residues Met-1–Gly-12 are compositionally biased toward low complexity. Positions Met-1–Pro-20 are disordered. Residues Leu-33–Pro-53 form a helical membrane-spanning segment.

Belongs to the ATPase B chain family. As to quaternary structure, F-type ATPases have 2 components, F(1) - the catalytic core - and F(0) - the membrane proton channel. F(1) has five subunits: alpha(3), beta(3), gamma(1), delta(1), epsilon(1). F(0) has three main subunits: a(1), b(2) and c(10-14). The alpha and beta chains form an alternating ring which encloses part of the gamma chain. F(1) is attached to F(0) by a central stalk formed by the gamma and epsilon chains, while a peripheral stalk is formed by the delta and b chains.

The protein localises to the cell inner membrane. Functionally, f(1)F(0) ATP synthase produces ATP from ADP in the presence of a proton or sodium gradient. F-type ATPases consist of two structural domains, F(1) containing the extramembraneous catalytic core and F(0) containing the membrane proton channel, linked together by a central stalk and a peripheral stalk. During catalysis, ATP synthesis in the catalytic domain of F(1) is coupled via a rotary mechanism of the central stalk subunits to proton translocation. In terms of biological role, component of the F(0) channel, it forms part of the peripheral stalk, linking F(1) to F(0). The b'-subunit is a diverged and duplicated form of b found in plants and photosynthetic bacteria. This Rhodopseudomonas palustris (strain BisA53) protein is ATP synthase subunit b 2 (atpF2).